The sequence spans 347 residues: Selenide, water dikinase (347 aa).

Residue Cys17 is part of the active site. ATP-binding positions include Lys20 and 48-50; that span reads TRD. Asp51 contacts Mg(2+). ATP contacts are provided by residues Asp68, Asp91, and 139 to 141; that span reads GHS. Asp91 contributes to the Mg(2+) binding site. Residue Asp227 coordinates Mg(2+).

Belongs to the selenophosphate synthase 1 family. Class I subfamily. As to quaternary structure, homodimer. It depends on Mg(2+) as a cofactor.

The catalysed reaction is hydrogenselenide + ATP + H2O = selenophosphate + AMP + phosphate + 2 H(+). Functionally, synthesizes selenophosphate from selenide and ATP. The protein is Selenide, water dikinase of Escherichia coli O157:H7.